A 161-amino-acid polypeptide reads, in one-letter code: Nucleotide-binding protein Nmul_A1044 (161 aa).

It belongs to the YajQ family.

Its function is as follows. Nucleotide-binding protein. The polypeptide is Nucleotide-binding protein Nmul_A1044 (Nitrosospira multiformis (strain ATCC 25196 / NCIMB 11849 / C 71)).